The primary structure comprises 341 residues: tRNA N6-adenosine threonylcarbamoyltransferase (341 aa).

Residues His-115 and His-119 each coordinate Fe cation. Residues 137 to 141, Asp-170, Gly-183, Asp-187, and Asn-276 contribute to the substrate site; that span reads AVSGG. Residue Asp-306 participates in Fe cation binding.

The protein belongs to the KAE1 / TsaD family. The cofactor is Fe(2+).

The protein localises to the cytoplasm. It carries out the reaction L-threonylcarbamoyladenylate + adenosine(37) in tRNA = N(6)-L-threonylcarbamoyladenosine(37) in tRNA + AMP + H(+). Functionally, required for the formation of a threonylcarbamoyl group on adenosine at position 37 (t(6)A37) in tRNAs that read codons beginning with adenine. Is involved in the transfer of the threonylcarbamoyl moiety of threonylcarbamoyl-AMP (TC-AMP) to the N6 group of A37, together with TsaE and TsaB. TsaD likely plays a direct catalytic role in this reaction. The polypeptide is tRNA N6-adenosine threonylcarbamoyltransferase (Lacticaseibacillus casei (strain BL23) (Lactobacillus casei)).